The sequence spans 114 residues: Ribosome-binding factor A (114 aa).

This sequence belongs to the RbfA family. In terms of assembly, monomer. Binds 30S ribosomal subunits, but not 50S ribosomal subunits or 70S ribosomes.

Its subcellular location is the cytoplasm. In terms of biological role, one of several proteins that assist in the late maturation steps of the functional core of the 30S ribosomal subunit. Associates with free 30S ribosomal subunits (but not with 30S subunits that are part of 70S ribosomes or polysomes). Required for efficient processing of 16S rRNA. May interact with the 5'-terminal helix region of 16S rRNA. The sequence is that of Ribosome-binding factor A from Macrococcus caseolyticus (strain JCSC5402) (Macrococcoides caseolyticum).